A 263-amino-acid polypeptide reads, in one-letter code: MKERFIKKTHYLDYQFDEPTDIKLGFTTRENGLSPYPNHSFNMARYISDSAHHITHHQDILANLIGYPRDEWVFPIQTHDSRIVEVTSEHKGTNIDELTDDLHGIDGMYTFDSHILLTMCYADCVPVYFYSEPHGYIGLAHAGWRGTYGQIVKEMLKKVDFDYEDLKIVIGPATSNSYEINDDIKNKFEELTIDSTLYIETRGKNQHGIDLKKANALLLEEAGVPSKNIYVTEYATSENLDLFFSYRVEKGQTGRMLAFIGRK.

Zn(2+) contacts are provided by H79, C124, and H141.

This sequence belongs to the purine nucleoside phosphorylase YfiH/LACC1 family. In terms of assembly, homodimer. Cu(2+) serves as cofactor. It depends on Zn(2+) as a cofactor.

The enzyme catalyses adenosine + phosphate = alpha-D-ribose 1-phosphate + adenine. It catalyses the reaction S-methyl-5'-thioadenosine + phosphate = 5-(methylsulfanyl)-alpha-D-ribose 1-phosphate + adenine. It carries out the reaction inosine + phosphate = alpha-D-ribose 1-phosphate + hypoxanthine. The catalysed reaction is adenosine + H2O + H(+) = inosine + NH4(+). In terms of biological role, purine nucleoside enzyme that catalyzes the phosphorolysis of adenosine and inosine nucleosides, yielding D-ribose 1-phosphate and the respective free bases, adenine and hypoxanthine. Also catalyzes the phosphorolysis of S-methyl-5'-thioadenosine into adenine and S-methyl-5-thio-alpha-D-ribose 1-phosphate. Also has adenosine deaminase activity. This chain is Purine nucleoside phosphorylase SE_0862, found in Staphylococcus epidermidis (strain ATCC 12228 / FDA PCI 1200).